The sequence spans 334 residues: Aspartate carbamoyltransferase catalytic subunit (334 aa).

Residues R71 and T72 each coordinate carbamoyl phosphate. Residue K99 coordinates L-aspartate. Positions 121, 151, and 154 each coordinate carbamoyl phosphate. 2 residues coordinate L-aspartate: R184 and R239. Carbamoyl phosphate contacts are provided by G280 and P281.

The protein belongs to the aspartate/ornithine carbamoyltransferase superfamily. ATCase family. As to quaternary structure, heterododecamer (2C3:3R2) of six catalytic PyrB chains organized as two trimers (C3), and six regulatory PyrI chains organized as three dimers (R2).

It carries out the reaction carbamoyl phosphate + L-aspartate = N-carbamoyl-L-aspartate + phosphate + H(+). It participates in pyrimidine metabolism; UMP biosynthesis via de novo pathway; (S)-dihydroorotate from bicarbonate: step 2/3. Its function is as follows. Catalyzes the condensation of carbamoyl phosphate and aspartate to form carbamoyl aspartate and inorganic phosphate, the committed step in the de novo pyrimidine nucleotide biosynthesis pathway. The sequence is that of Aspartate carbamoyltransferase catalytic subunit from Pseudomonas savastanoi pv. phaseolicola (strain 1448A / Race 6) (Pseudomonas syringae pv. phaseolicola (strain 1448A / Race 6)).